The primary structure comprises 598 residues: Aspartate--tRNA(Asp/Asn) ligase (598 aa).

E170 is an L-aspartate binding site. The interval 194–197 is aspartate; the sequence is QLFK. R216 is an L-aspartate binding site. ATP contacts are provided by residues 216 to 218 and Q225; that span reads RDE. Residue H448 coordinates L-aspartate. E482 serves as a coordination point for ATP. R489 serves as a coordination point for L-aspartate. 534 to 537 contacts ATP; sequence GWDR. The segment at 558–598 is disordered; the sequence is GGGVDPLTDAPAPITPQQRKESGIDAKPREDKPKEDAKSKA. Residues 575-598 are compositionally biased toward basic and acidic residues; it reads QRKESGIDAKPREDKPKEDAKSKA.

It belongs to the class-II aminoacyl-tRNA synthetase family. Type 1 subfamily. As to quaternary structure, homodimer.

The protein localises to the cytoplasm. The catalysed reaction is tRNA(Asx) + L-aspartate + ATP = L-aspartyl-tRNA(Asx) + AMP + diphosphate. Aspartyl-tRNA synthetase with relaxed tRNA specificity since it is able to aspartylate not only its cognate tRNA(Asp) but also tRNA(Asn). Reaction proceeds in two steps: L-aspartate is first activated by ATP to form Asp-AMP and then transferred to the acceptor end of tRNA(Asp/Asn). In Mycolicibacterium smegmatis (strain ATCC 700084 / mc(2)155) (Mycobacterium smegmatis), this protein is Aspartate--tRNA(Asp/Asn) ligase.